Consider the following 88-residue polypeptide: Large ribosomal subunit protein bL27 (88 aa).

The tract at residues 1-21 is disordered; it reads MAHKKGASSSRNGRDSAAHRL.

It belongs to the bacterial ribosomal protein bL27 family.

In Mycobacterium ulcerans (strain Agy99), this protein is Large ribosomal subunit protein bL27.